The primary structure comprises 148 residues: Large ribosomal subunit protein uL11 (148 aa).

Belongs to the universal ribosomal protein uL11 family. Part of the ribosomal stalk of the 50S ribosomal subunit. Interacts with L10 and the large rRNA to form the base of the stalk. L10 forms an elongated spine to which L12 dimers bind in a sequential fashion forming a multimeric L10(L12)X complex. In terms of processing, one or more lysine residues are methylated.

Forms part of the ribosomal stalk which helps the ribosome interact with GTP-bound translation factors. This is Large ribosomal subunit protein uL11 from Myxococcus xanthus (strain DK1622).